Here is a 337-residue protein sequence, read N- to C-terminus: Glyceraldehyde-3-phosphate dehydrogenase (337 aa).

NAD(+) contacts are provided by residues 12-13 (RI), Asp34, and Lys79. D-glyceraldehyde 3-phosphate is bound by residues 150 to 152 (SCT), Thr181, 210 to 211 (TG), and Arg233. The Nucleophile role is filled by Cys151. Asn315 is an NAD(+) binding site.

Belongs to the glyceraldehyde-3-phosphate dehydrogenase family. In terms of assembly, homotetramer. Expressed in all tissues examined.

It is found in the cytoplasm. The catalysed reaction is D-glyceraldehyde 3-phosphate + phosphate + NAD(+) = (2R)-3-phospho-glyceroyl phosphate + NADH + H(+). It functions in the pathway carbohydrate degradation; glycolysis; pyruvate from D-glyceraldehyde 3-phosphate: step 1/5. This is Glyceraldehyde-3-phosphate dehydrogenase (gpd) from Lentinula edodes (Shiitake mushroom).